A 30-amino-acid chain; its full sequence is NADH-ubiquinone oxidoreductase chain 5 (30 aa).

The chain crosses the membrane as a helical span at residues 7-27; the sequence is NIIIIINSSLIIILFSSIFFF.

The protein belongs to the complex I subunit 5 family.

It is found in the mitochondrion inner membrane. The enzyme catalyses a ubiquinone + NADH + 5 H(+)(in) = a ubiquinol + NAD(+) + 4 H(+)(out). Core subunit of the mitochondrial membrane respiratory chain NADH dehydrogenase (Complex I) that is believed to belong to the minimal assembly required for catalysis. Complex I functions in the transfer of electrons from NADH to the respiratory chain. The immediate electron acceptor for the enzyme is believed to be ubiquinone. This is NADH-ubiquinone oxidoreductase chain 5 (ND5) from Pisaster ochraceus (Ochre sea star).